The primary structure comprises 188 residues: Ribosome-recycling factor (188 aa).

The protein belongs to the RRF family.

The protein resides in the cytoplasm. In terms of biological role, responsible for the release of ribosomes from messenger RNA at the termination of protein biosynthesis. May increase the efficiency of translation by recycling ribosomes from one round of translation to another. The sequence is that of Ribosome-recycling factor from Caulobacter sp. (strain K31).